Reading from the N-terminus, the 468-residue chain is Adenosylhomocysteinase (468 aa).

Substrate-binding residues include threonine 57, aspartate 132, and glutamate 194. Threonine 195–threonine 197 is an NAD(+) binding site. Lysine 224 and aspartate 228 together coordinate substrate. NAD(+)-binding positions include asparagine 229, glycine 258 to glycine 263, glutamate 281, asparagine 316, isoleucine 337 to histidine 339, and asparagine 382.

Belongs to the adenosylhomocysteinase family. Requires NAD(+) as cofactor.

The protein resides in the cytoplasm. The enzyme catalyses S-adenosyl-L-homocysteine + H2O = L-homocysteine + adenosine. Its pathway is amino-acid biosynthesis; L-homocysteine biosynthesis; L-homocysteine from S-adenosyl-L-homocysteine: step 1/1. Its function is as follows. May play a key role in the regulation of the intracellular concentration of adenosylhomocysteine. The sequence is that of Adenosylhomocysteinase from Methylobacterium nodulans (strain LMG 21967 / CNCM I-2342 / ORS 2060).